The primary structure comprises 204 residues: Large ribosomal subunit protein eL15 (204 aa).

It belongs to the eukaryotic ribosomal protein eL15 family. Component of the large ribosomal subunit.

The protein resides in the cytoplasm. Functionally, component of the large ribosomal subunit. The ribosome is a large ribonucleoprotein complex responsible for the synthesis of proteins in the cell. The chain is Large ribosomal subunit protein eL15 (rpl15) from Paramisgurnus dabryanus.